We begin with the raw amino-acid sequence, 359 residues long: Mannonate dehydratase (359 aa).

Belongs to the mannonate dehydratase family. Fe(2+) serves as cofactor. The cofactor is Mn(2+).

It catalyses the reaction D-mannonate = 2-dehydro-3-deoxy-D-gluconate + H2O. It participates in carbohydrate metabolism; pentose and glucuronate interconversion. Functionally, catalyzes the dehydration of D-mannonate. The sequence is that of Mannonate dehydratase (uxuA) from Bacillus subtilis (strain 168).